Reading from the N-terminus, the 696-residue chain is DNA ligase (696 aa).

Residues 36–40 (DAEYD), 85–86 (SL), and Glu-123 contribute to the NAD(+) site. The active-site N6-AMP-lysine intermediate is the Lys-125. NAD(+) contacts are provided by Arg-146, Glu-181, Lys-319, and Lys-343. Residues Cys-437, Cys-440, Cys-455, and Cys-461 each contribute to the Zn(2+) site. One can recognise a BRCT domain in the interval 618–696 (PEGTSLAGKT…EDGLKALLGL (79 aa)).

Belongs to the NAD-dependent DNA ligase family. LigA subfamily. Mg(2+) is required as a cofactor. It depends on Mn(2+) as a cofactor.

The enzyme catalyses NAD(+) + (deoxyribonucleotide)n-3'-hydroxyl + 5'-phospho-(deoxyribonucleotide)m = (deoxyribonucleotide)n+m + AMP + beta-nicotinamide D-nucleotide.. Its function is as follows. DNA ligase that catalyzes the formation of phosphodiester linkages between 5'-phosphoryl and 3'-hydroxyl groups in double-stranded DNA using NAD as a coenzyme and as the energy source for the reaction. It is essential for DNA replication and repair of damaged DNA. The sequence is that of DNA ligase from Bordetella pertussis (strain Tohama I / ATCC BAA-589 / NCTC 13251).